We begin with the raw amino-acid sequence, 200 residues long: 3-isopropylmalate dehydratase small subunit (200 aa).

The protein belongs to the LeuD family. LeuD type 1 subfamily. Heterodimer of LeuC and LeuD.

It catalyses the reaction (2R,3S)-3-isopropylmalate = (2S)-2-isopropylmalate. It functions in the pathway amino-acid biosynthesis; L-leucine biosynthesis; L-leucine from 3-methyl-2-oxobutanoate: step 2/4. Functionally, catalyzes the isomerization between 2-isopropylmalate and 3-isopropylmalate, via the formation of 2-isopropylmaleate. The polypeptide is 3-isopropylmalate dehydratase small subunit (Vibrio campbellii (strain ATCC BAA-1116)).